A 139-amino-acid chain; its full sequence is Small ribosomal subunit protein bS6 (139 aa).

The disordered stretch occupies residues 120–139 (KGASKVETPTGPESTDIQEK). Residues 130-139 (GPESTDIQEK) show a composition bias toward polar residues.

This sequence belongs to the bacterial ribosomal protein bS6 family.

Its function is as follows. Binds together with bS18 to 16S ribosomal RNA. This is Small ribosomal subunit protein bS6 (rpsF) from Borreliella burgdorferi (strain ATCC 35210 / DSM 4680 / CIP 102532 / B31) (Borrelia burgdorferi).